The sequence spans 180 residues: UPF0227 protein KPN78578_10770 (180 aa).

This sequence belongs to the UPF0227 family.

The sequence is that of UPF0227 protein KPN78578_10770 from Klebsiella pneumoniae subsp. pneumoniae (strain ATCC 700721 / MGH 78578).